The chain runs to 67 residues: Large ribosomal subunit protein bL35 (67 aa).

The protein belongs to the bacterial ribosomal protein bL35 family.

This Mesorhizobium japonicum (strain LMG 29417 / CECT 9101 / MAFF 303099) (Mesorhizobium loti (strain MAFF 303099)) protein is Large ribosomal subunit protein bL35.